The primary structure comprises 166 residues: Lipoprotein signal peptidase (166 aa).

The next 4 membrane-spanning stretches (helical) occupy residues 9–29, 45–65, 71–91, and 99–119; these read ASGA…FDQL, ALTS…FGFL, WQRW…CYLL, and LFSL…IDRL. Active-site residues include Asp-126 and Asp-144. Residues 135–155 traverse the membrane as a helical segment; that stretch reads WHFPAFNLADSAITVGAVLLI.

It belongs to the peptidase A8 family.

The protein localises to the cell inner membrane. The enzyme catalyses Release of signal peptides from bacterial membrane prolipoproteins. Hydrolyzes -Xaa-Yaa-Zaa-|-(S,diacylglyceryl)Cys-, in which Xaa is hydrophobic (preferably Leu), and Yaa (Ala or Ser) and Zaa (Gly or Ala) have small, neutral side chains.. The protein operates within protein modification; lipoprotein biosynthesis (signal peptide cleavage). Functionally, this protein specifically catalyzes the removal of signal peptides from prolipoproteins. The sequence is that of Lipoprotein signal peptidase from Burkholderia vietnamiensis (strain G4 / LMG 22486) (Burkholderia cepacia (strain R1808)).